A 144-amino-acid polypeptide reads, in one-letter code: MRFTPAIVIAAFCSLAVAAPAAKAIARSPSEAVEDYVIPIDKKRGEAVEDYVIPIDKKRGEAVEDYVIPFDKRGEAVEDYVIPIDKKRGEAVEDYVIPFDKRGEAVEDYVIPIDKKRGEAVEDYVIPFDKRGEAVEDYVIPIDK.

Positions 1–18 are cleaved as a signal peptide; it reads MRFTPAIVIAAFCSLAVA. 9 consecutive propeptides follow at residues 19-35, 42-50, 57-65, 72-79, 86-94, 101-108, 115-123, 130-137, and K144; these read APAAKAIARSPSEAVED, KKRGEAVED, and KRGEAVED.

Post-translationally, phomA' is processed by several endopeptidases including kexin proteases as well as the cluster-specific S41 family peptidase phomP1' and the peptidase phomG' to produce 5 identical copies of the hexapeptide Tyr-Val-Ile-Pro-Ile-Asp and 3 identical copies of Tyr-Val-Ile-Pro-Phe-Asp, that are further modified into phomapsins A and P, respectively. The timing and order of proteolysis of the phomA' precursor and PTMs are still unknown. Two tyrosinase-like enzyme phomQ1' and PhomQ2, catalyze the chlorination and hydroxylation of Tyr, respectively. PhomYb', is proposed to be involved in the construction of the macrocyclic structure. The other four ustYa family proteins may be involved in PTMs that generate the unique structure of phomopsin A. PhomYa' is required for the hydroxylation of C-beta of Tyr. PhomYc', PhomYd', and PhomYe' are responsible for the biosynthesis of 2,3-dehydroisoleucine (dIle), 2,3-dehydroaspartic acid (dAsp), and 3,4-dehydroproline (dPro), respectively. While dIle formation by phomYc is indispensable for the installation of dAsp by phomYd, the order of the other PTMs have not been elucidated yet. Most of the biosynthetic enzymes likely have broad substrate specificity, and thus, there might be a metabolic grid from a precursor to phomopsin A. The enzyme(s) responsible for the biosynthesis of 3,4-dehydrovaline (dVal) have also not been identified yet. Finally, PhomM' acts as an S-adenosylmethionine-dependent alpha-N-methyltransferase that catalyzes two successive N-methylation reactions, converting N-desmethyl-phomopsin A to phomopsin A and phomopsin A further to an N,N-dimethylated congener called phomopsin E.

The protein operates within mycotoxin biosynthesis. Its function is as follows. Ribosomally synthesized cyclic peptide phomopsin precursor; part of the gene cluster that mediates the biosynthesis of the phomopsins, a group of hexapeptide mycotoxins which infects lupins and causes lupinosis disease in livestock. The phomA' translated product contains a 5-fold repeated peptide embedding the hexapeptide Tyr-Val-Ile-Pro-Ile-Asp and a 3-fold repeated peptide embedding the hexapeptide Tyr-Val-Ile-Pro-Phe-Asp, that is converted into phomapsin A and phomapsin P, respectively. After being excised from the precursor peptide by kexin proteases, the core peptides are cyclized and modified post-translationally by enzymes encoded within the corresponding gene cluster. The sequence is that of Ribosomally synthesized cyclic peptide phomopsin precursor phomA' from Diaporthe leptostromiformis (Lupinosis disease fungus).